The primary structure comprises 134 residues: Ribonuclease VapC1 (134 aa).

One can recognise a PINc domain in the interval 3 to 132; it reads YMLDTNIIIY…RITDLQWQDW (130 aa). The Mg(2+) site is built by Asp-6 and Asp-99.

It belongs to the PINc/VapC protein family. Mg(2+) is required as a cofactor.

In terms of biological role, toxic component of a type II toxin-antitoxin (TA) system. Acts as an RNase, its toxic effect is neutralized by VapB1 antitoxin. This is Ribonuclease VapC1 from Haemophilus influenzae (strain ATCC 51907 / DSM 11121 / KW20 / Rd).